We begin with the raw amino-acid sequence, 339 residues long: Ketol-acid reductoisomerase (NADP(+)) (339 aa).

The KARI N-terminal Rossmann domain maps to 1–182 (MRVYYDRDAD…GGGRSGVIET (182 aa)). Residues 24–27 (YGSQ), R48, S51, T53, and 83–86 (DELQ) contribute to the NADP(+) site. Residue H108 is part of the active site. An NADP(+)-binding site is contributed by G134. Positions 183–328 (TFKEECETDL…GKLRAMMPWI (146 aa)) constitute a KARI C-terminal knotted domain. Mg(2+) contacts are provided by D191, E195, E227, and E231. Residue S252 coordinates substrate.

The protein belongs to the ketol-acid reductoisomerase family. Mg(2+) serves as cofactor.

It carries out the reaction (2R)-2,3-dihydroxy-3-methylbutanoate + NADP(+) = (2S)-2-acetolactate + NADPH + H(+). The catalysed reaction is (2R,3R)-2,3-dihydroxy-3-methylpentanoate + NADP(+) = (S)-2-ethyl-2-hydroxy-3-oxobutanoate + NADPH + H(+). The protein operates within amino-acid biosynthesis; L-isoleucine biosynthesis; L-isoleucine from 2-oxobutanoate: step 2/4. Its pathway is amino-acid biosynthesis; L-valine biosynthesis; L-valine from pyruvate: step 2/4. Its function is as follows. Involved in the biosynthesis of branched-chain amino acids (BCAA). Catalyzes an alkyl-migration followed by a ketol-acid reduction of (S)-2-acetolactate (S2AL) to yield (R)-2,3-dihydroxy-isovalerate. In the isomerase reaction, S2AL is rearranged via a Mg-dependent methyl migration to produce 3-hydroxy-3-methyl-2-ketobutyrate (HMKB). In the reductase reaction, this 2-ketoacid undergoes a metal-dependent reduction by NADPH to yield (R)-2,3-dihydroxy-isovalerate. The protein is Ketol-acid reductoisomerase (NADP(+)) of Brucella canis (strain ATCC 23365 / NCTC 10854 / RM-666).